A 424-amino-acid polypeptide reads, in one-letter code: UDP-N-acetylglucosamine 1-carboxyvinyltransferase (424 aa).

Residue 22–23 participates in phosphoenolpyruvate binding; that stretch reads KN. Residue arginine 93 participates in UDP-N-acetyl-alpha-D-glucosamine binding. Catalysis depends on cysteine 117, which acts as the Proton donor. A 2-(S-cysteinyl)pyruvic acid O-phosphothioketal modification is found at cysteine 117. Residues 122 to 126, 162 to 165, aspartate 307, and isoleucine 329 each bind UDP-N-acetyl-alpha-D-glucosamine; these read RPVDL and KVSV.

The protein belongs to the EPSP synthase family. MurA subfamily.

It localises to the cytoplasm. The enzyme catalyses phosphoenolpyruvate + UDP-N-acetyl-alpha-D-glucosamine = UDP-N-acetyl-3-O-(1-carboxyvinyl)-alpha-D-glucosamine + phosphate. The protein operates within cell wall biogenesis; peptidoglycan biosynthesis. Its function is as follows. Cell wall formation. Adds enolpyruvyl to UDP-N-acetylglucosamine. This Histophilus somni (strain 129Pt) (Haemophilus somnus) protein is UDP-N-acetylglucosamine 1-carboxyvinyltransferase.